Reading from the N-terminus, the 1826-residue chain is Protein TIC 214 (1826 aa).

Transmembrane regions (helical) follow at residues 18 to 38, 67 to 87, 127 to 147, 175 to 195, and 221 to 241; these read IINS…FSIG, FITG…HLAL, LSIQ…HFIL, VGWL…LVWI, and IFSI…PSPI. Positions 250–308 are disordered; the sequence is TEEGWESEEETDVEIETASETKGTKQEQEGSTEEDPSPSLFSEEKEDPDKIDETEEIRV. Acidic residues-rich tracts occupy residues 252–266 and 293–304; these read EGWE…EIET and EKEDPDKIDETE. Residues 774–794 traverse the membrane as a helical segment; sequence LILIIQSIFRKYILLPSLIIV. Residues 1032-1057 are disordered; that stretch reads TKGLMKEKNSNAKKRGSPNKTSFNRK. A compositionally biased stretch (basic residues) spans 1042–1057; sequence NAKKRGSPNKTSFNRK. A helical membrane pass occupies residues 1081-1101; that stretch reads FYLFITIFIKRIYIDIFVCII.

This sequence belongs to the TIC214 family. In terms of assembly, part of the Tic complex.

It is found in the plastid. Its subcellular location is the chloroplast inner membrane. Its function is as follows. Involved in protein precursor import into chloroplasts. May be part of an intermediate translocation complex acting as a protein-conducting channel at the inner envelope. This is Protein TIC 214 from Daucus carota (Wild carrot).